We begin with the raw amino-acid sequence, 421 residues long: MYFIDEAINEIKAGNGGNGVVSFRKEKYVPLGGPDGGNGGKGGSIFFIGEQSENNLLKLKYQKHLKAKNGENGKNKNKHGANAENIYIKVPLGTIIYNLQNEITGEILKHGEILTIAKGGRGGKGNKSLATFKNPVPKYAEKGGIGESFKIKTELKILADVGLIGYPSVGKSTLISIISDAKPKIADYPFTTLKPYLGMVYVDNESFIVADLPGLIPNAHLGKGMGIKFLKHIERCRILIHMCDMSKSNPLQDIENLNQELKIYNKNLLKKPQIIIANKMDIIGAKTKLIELQKKILNKNIIPTSLLKNQNLKILKYKMLEMIKKNVVNLPLCENSSFKTYTLEEEKPDFVIKKDNQGFFVVKGEKIEKFFYKTDFNNEEATKKFAIFLKKIGVEEELIKKGVYFSKNKIKICDRVFEFIT.

The region spanning 1–158 (MYFIDEAINE…FKIKTELKIL (158 aa)) is the Obg domain. Residues 159–324 (ADVGLIGYPS…LKYKMLEMIK (166 aa)) form the OBG-type G domain. GTP-binding positions include 165 to 172 (GYPSVGKS), 190 to 194 (FTTLK), 211 to 214 (DLPG), 278 to 281 (NKMD), and 305 to 307 (SLL). Positions 172 and 192 each coordinate Mg(2+). An OCT domain is found at 342–421 (TLEEEKPDFV…ICDRVFEFIT (80 aa)).

The protein belongs to the TRAFAC class OBG-HflX-like GTPase superfamily. OBG GTPase family. Monomer. It depends on Mg(2+) as a cofactor.

It is found in the cytoplasm. In terms of biological role, an essential GTPase which binds GTP, GDP and possibly (p)ppGpp with moderate affinity, with high nucleotide exchange rates and a fairly low GTP hydrolysis rate. Plays a role in control of the cell cycle, stress response, ribosome biogenesis and in those bacteria that undergo differentiation, in morphogenesis control. In Phytoplasma mali (strain AT), this protein is GTPase Obg.